We begin with the raw amino-acid sequence, 115 residues long: Large ribosomal subunit protein bL19 (115 aa).

Belongs to the bacterial ribosomal protein bL19 family.

Its function is as follows. This protein is located at the 30S-50S ribosomal subunit interface and may play a role in the structure and function of the aminoacyl-tRNA binding site. This is Large ribosomal subunit protein bL19 from Streptococcus equi subsp. equi (strain 4047).